Reading from the N-terminus, the 505-residue chain is Retinoic acid receptor gamma (505 aa).

2 disordered regions span residues 1–57 (MMKF…SSKD) and 113–134 (SLSVETQSTSSEEMVPSSPSPP). Basic and acidic residues-rich tracts occupy residues 12–22 (DGGERPEEEGK) and 32–46 (MGKEEFTGSVGKEEA). A modulating region spans residues 52-142 (MSSSKDRICS…PPPPPRVYKP (91 aa)). Polar residues predominate over residues 115 to 124 (SVETQSTSSE). 2 NR C4-type zinc fingers span residues 143–163 (CFVCNDKSSGYHYGVSSCEGC) and 179–203 (CHRDKNCQINKVTRNRCQYCRLQKC). Residues 143 to 208 (CFVCNDKSSG…RLQKCFEVGM (66 aa)) constitute a DNA-binding region (nuclear receptor). The hinge stretch occupies residues 209–237 (SKEAVRNDRNKKKKEIKEEVVTDSYEMPP). In terms of domain architecture, NR LBD spans 238–472 (EMEALIQKVS…PLIREMLENP (235 aa)). The tract at residues 462–505 (PPLIREMLENPEAFEDDASPPPKSEQKPIKVEEKPGEKTSTKDP) is disordered. The span at 485 to 505 (SEQKPIKVEEKPGEKTSTKDP) shows a compositional bias: basic and acidic residues.

Belongs to the nuclear hormone receptor family. NR1 subfamily. Heterodimer; with a RXR molecule. Binds DNA preferentially as a RAR/RXR heterodimer. As to expression, isoform Delta-1A and Isoform Delta-1B are most abundant in regenerating limbs, tails, and the anterior half of the lower jaw. Isoform Delta-2 is broadly and uniformly distributed.

The protein localises to the nucleus. Receptor for retinoic acid. Retinoic acid receptors bind as heterodimers to their target response elements in response to their ligands, all-trans or 9-cis retinoic acid, and regulate gene expression in various biological processes. The RAR/RXR heterodimers bind to the retinoic acid response elements (RARE) composed of tandem 5'-AGGTCA-3' sites known as DR1-DR5. The sequence is that of Retinoic acid receptor gamma (RARG) from Notophthalmus viridescens (Eastern newt).